A 387-amino-acid chain; its full sequence is 3-ketoacyl-CoA thiolase (387 aa).

Cysteine 91 serves as the catalytic Acyl-thioester intermediate. Residues histidine 343 and cysteine 373 each act as proton acceptor in the active site.

This sequence belongs to the thiolase-like superfamily. Thiolase family. In terms of assembly, heterotetramer of two alpha chains (FadB) and two beta chains (FadA).

Its subcellular location is the cytoplasm. It carries out the reaction an acyl-CoA + acetyl-CoA = a 3-oxoacyl-CoA + CoA. It participates in lipid metabolism; fatty acid beta-oxidation. Functionally, catalyzes the final step of fatty acid oxidation in which acetyl-CoA is released and the CoA ester of a fatty acid two carbons shorter is formed. The chain is 3-ketoacyl-CoA thiolase from Salmonella choleraesuis (strain SC-B67).